The primary structure comprises 261 residues: uncharacterized protein (261 aa).

Transmembrane regions (helical) follow at residues 37 to 57 (ALVVFHIAISTAFCGMIWLGI), 68 to 88 (SSPLLLVFAPSLLWCLVLIQG), 95 to 115 (VVLTMGYVGLLSVTTVFYTWC), 121 to 141 (ILIDYTLVLTLWIACTGAVMV), 150 to 170 (WELICSRVLTSVFFITLWVIG), 180 to 200 (ILLYGYGAIVFLMMTVTFYGT), and 215 to 235 (GSLLIYVGLVTMFKITLIVLS).

Belongs to the cytomegalovirus US12 family.

Its subcellular location is the membrane. This is an uncharacterized protein from Homo sapiens (Human).